Consider the following 262-residue polypeptide: MASFGWKRRIGEKVSKATSQQFEAEAADEKDAAENEDGNWLQASKRRKETLQEGCKQRSQQLKDEGAQLAENKRYKEAIQKWDEALQLTPGDATLYEMKSQVLLSLHEMFPAVHAAEMAVKRNPHSWEAWQTLGRAQLGLGEIVLAIRSFQIALHIYPMNPELWKEDLSWARKLQEQQKVAQRIENKEMPPEGPDLSPGSIPDYDFESDEIVAVCAAVAEKQKSVSANKTMVIVSASGTVEIVNEKEEGSSTPDGSVFIKAR.

Residues 17 to 63 form a disordered region; the sequence is ATSQQFEAEAADEKDAAENEDGNWLQASKRRKETLQEGCKQRSQQLK. TPR repeat units lie at residues 59 to 92, 93 to 126, and 127 to 160; these read SQQLKDEGAQLAENKRYKEAIQKWDEALQLTPGD, ATLYEMKSQVLLSLHEMFPAVHAAEMAVKRNPHS, and WEAWQTLGRAQLGLGEIVLAIRSFQIALHIYPMN. Residue Ser197 is modified to Phosphoserine.

The sequence is that of Tetratricopeptide repeat protein 33 (Ttc33) from Mus musculus (Mouse).